The sequence spans 1372 residues: DNA-directed RNA polymerase subunit beta' (1372 aa).

Cys69, Cys71, Cys84, and Cys87 together coordinate Zn(2+). Mg(2+) is bound by residues Asp460, Asp462, and Asp464. The Zn(2+) site is built by Cys808, Cys882, Cys889, and Cys892.

This sequence belongs to the RNA polymerase beta' chain family. In terms of assembly, the RNAP catalytic core consists of 2 alpha, 1 beta, 1 beta' and 1 omega subunit. When a sigma factor is associated with the core the holoenzyme is formed, which can initiate transcription. It depends on Mg(2+) as a cofactor. The cofactor is Zn(2+).

It catalyses the reaction RNA(n) + a ribonucleoside 5'-triphosphate = RNA(n+1) + diphosphate. In terms of biological role, DNA-dependent RNA polymerase catalyzes the transcription of DNA into RNA using the four ribonucleoside triphosphates as substrates. The sequence is that of DNA-directed RNA polymerase subunit beta' from Rickettsia prowazekii (strain Madrid E).